We begin with the raw amino-acid sequence, 100 residues long: MGRFVVWPSELDSRLSRKYGRIVPRSIAVESPRVEEIVRAAEELKFKVIRVEEDKLNPRLSGIDEELRTFGMIVLESPYGKSKSLKLIAQKIREFRRRSA.

It belongs to the SRP19 family. In terms of assembly, part of the signal recognition particle protein translocation system, which is composed of SRP and FtsY. Archaeal SRP consists of a 7S RNA molecule of 300 nucleotides and two protein subunits: SRP54 and SRP19.

It localises to the cytoplasm. In terms of biological role, involved in targeting and insertion of nascent membrane proteins into the cytoplasmic membrane. Binds directly to 7S RNA and mediates binding of the 54 kDa subunit of the SRP. The sequence is that of Signal recognition particle 19 kDa protein from Pyrococcus furiosus (strain ATCC 43587 / DSM 3638 / JCM 8422 / Vc1).